We begin with the raw amino-acid sequence, 992 residues long: Aminopeptidase Q (992 aa).

Topologically, residues 2-13 (GPPSSSGFYVSR) are cytoplasmic. A helical; Signal-anchor for type II membrane protein membrane pass occupies residues 14–34 (AVALLLAALAAALLLALAVLA). Residues 35–992 (ALYGRCARVQ…RMTAWLRKNT (958 aa)) are Extracellular-facing. Residues 48 to 92 (LHHGGVPDAASSPRGTQEEQLPTWPPRPTREPAGTATPGHWRPPG) are disordered. Asn-133 carries an N-linked (GlcNAc...) asparagine glycan. Residue Glu-241 participates in substrate binding. Residues Asn-262, Asn-289, Asn-347, and Asn-361 are each glycosylated (N-linked (GlcNAc...) asparagine). 380–384 (SAMEN) serves as a coordination point for substrate. His-416 is a Zn(2+) binding site. Catalysis depends on Glu-417, which acts as the Proton acceptor. Zn(2+) contacts are provided by His-420 and Glu-439. Asn-489 carries an N-linked (GlcNAc...) asparagine glycan. Residue Tyr-505 is the Proton donor of the active site. N-linked (GlcNAc...) asparagine glycosylation is found at Asn-584, Asn-602, Asn-609, Asn-655, Asn-811, Asn-850, and Asn-889.

It belongs to the peptidase M1 family. The cofactor is Zn(2+). In terms of tissue distribution, expressed in skin. Expression levels do not differ between dark and light skin areas.

Its subcellular location is the membrane. Its function is as follows. Metalloprotease which may be important for placentation by regulating biological activity of key peptides at the embryo-maternal interface. Involved in coat pigmentation patterns. During skin development, may be required to establish the periodicity of tabby markings, initiating a pre-pattern at or before hair follicle development. The polypeptide is Aminopeptidase Q (LVRN) (Acinonyx jubatus (Cheetah)).